A 140-amino-acid chain; its full sequence is Thymic stromal lymphopoietin (140 aa).

A signal peptide spans 1–19 (MVLLRSLFILQVLVRMGLT). Residues Asn-21 and Asn-26 are each glycosylated (N-linked (GlcNAc...) asparagine). 3 disulfides stabilise this stretch: Cys-25-Cys-98, Cys-57-Cys-63, and Cys-78-Cys-121. Asn-123 is a glycosylation site (N-linked (GlcNAc...) asparagine).

Interacts with a receptor composed of CRLF2 and IL7R. Binding of TSLP to CRLF2/TSLPR is a mechanistic prerequisite for recruitment of IL7R to the high-affinity ternary complex.

It localises to the secreted. Functionally, cytokine that induces the release of T-cell-attracting chemokines from monocytes and, in particular, enhances the maturation of CD11c(+) dendritic cells. Can induce allergic inflammation by directly activating mast cells. The protein is Thymic stromal lymphopoietin (Tslp) of Mus musculus (Mouse).